The chain runs to 321 residues: Glucokinase (321 aa).

8–13 (ADIGGT) lines the ATP pocket.

The protein belongs to the bacterial glucokinase family.

Its subcellular location is the cytoplasm. The catalysed reaction is D-glucose + ATP = D-glucose 6-phosphate + ADP + H(+). In Paramagnetospirillum magneticum (strain ATCC 700264 / AMB-1) (Magnetospirillum magneticum), this protein is Glucokinase.